A 547-amino-acid polypeptide reads, in one-letter code: Heme-binding protein A (547 aa).

The signal sequence occupies residues 1–18 (MKLKATLTLAAATLVLAA). Cys19 carries N-palmitoyl cysteine lipidation. The S-diacylglycerol cysteine moiety is linked to residue Cys19.

Belongs to the bacterial solute-binding protein 5 family.

It localises to the cell inner membrane. Its function is as follows. Important role in heme acquisition or metabolism. This chain is Heme-binding protein A (hbpA), found in Haemophilus influenzae (strain ATCC 51907 / DSM 11121 / KW20 / Rd).